The sequence spans 353 residues: Tetrahedral aminopeptidase (353 aa).

Zn(2+)-binding residues include H68 and D182. The Proton acceptor role is filled by E212. Zn(2+) is bound by residues E213, D235, and H323.

This sequence belongs to the peptidase M42 family. In terms of assembly, homododecamer. The assembly of six dimers results in a tetrahedral-shaped structure; all 12 active sites are located on the inside of the tetrahedron. Substrate access is granted by four pores with a maximal diameter of 18 Angstroms, allowing only small peptides and unfolded proteins access to the active site. Beside the four entry ports, TET contains 12 small product release openings, which are large enough to allow passage of only single amino acid residues. Requires Zn(2+) as cofactor. It depends on Co(2+) as a cofactor.

Inhibited by EDTA and bestatin in vitro. Is insensitive to papain, antipain, chymostatin, leupeptin, pepstatin and aprotinin. In terms of biological role, functions as an aminopeptidase, with a clear preference for leucine as the N-terminal amino acid. However, can also cleave moderately long polypeptide substrates of various compositions in a fairly unspecific manner. Has neither carboxypeptidase nor endoproteolytic activities, and it is devoid of N-terminal deblocking activity. Is involved in protein degradation, performing degradation of oligopeptides produced by the proteasome into single amino acids. The chain is Tetrahedral aminopeptidase (frvX) from Pyrococcus horikoshii (strain ATCC 700860 / DSM 12428 / JCM 9974 / NBRC 100139 / OT-3).